Reading from the N-terminus, the 358-residue chain is Protein-arginine kinase (358 aa).

The Phosphagen kinase C-terminal domain occupies 23–250; that stretch reads VWPVTTFSLA…SKLSVAEVAA (228 aa). ATP contacts are provided by residues 26 to 30, 174 to 178, and 203 to 208; these read VTTFS, KSQCF, and SSLLLG.

It belongs to the ATP:guanido phosphotransferase family.

The catalysed reaction is L-arginyl-[protein] + ATP = N(omega)-phospho-L-arginyl-[protein] + ADP + H(+). Functionally, catalyzes the specific phosphorylation of arginine residues in proteins. The sequence is that of Protein-arginine kinase from Chlamydia pneumoniae (Chlamydophila pneumoniae).